A 313-amino-acid chain; its full sequence is MMENYKHTTVLLDEAVNGLNIRPDGIYIDGTFGRGGHSRLILSQLGEEGRLLAIDRDPQAIAVAKTIDDPRFSIIHGPFSALGEYVAERDLIGKIDGILLDLGVSSPQLDDAERGFSFMRDGPLDMRMDPTRGQSAAEWLQTAEEADIAWVLKTYGEEHFAKRIARAIVERNREQPMTRTKELAEVVAAATPVKDKFKHPATRTFQAVRIWVNSELEEIEQALKSSLNVLAPGGRLSIISFHSLEDRIVKRFMRENSRGPQVPAGLPMTEEQLKKLGGRQLRALGKLMPGEEEVAENPRARSSVLRIAERTNA.

S-adenosyl-L-methionine contacts are provided by residues Gly-35–His-37, Asp-55, Phe-79, Asp-101, and Gln-108.

It belongs to the methyltransferase superfamily. RsmH family.

Its subcellular location is the cytoplasm. The catalysed reaction is cytidine(1402) in 16S rRNA + S-adenosyl-L-methionine = N(4)-methylcytidine(1402) in 16S rRNA + S-adenosyl-L-homocysteine + H(+). Its function is as follows. Specifically methylates the N4 position of cytidine in position 1402 (C1402) of 16S rRNA. In Shigella flexneri, this protein is Ribosomal RNA small subunit methyltransferase H.